A 378-amino-acid chain; its full sequence is Putative monoglyceride lipase (378 aa).

The GXSXG motif lies at Gly97–Gly101. Ser99 functions as the Nucleophile in the catalytic mechanism. Residues Asp219 and His249 each act as charge relay system in the active site. Basic and acidic residues predominate over residues Pro276–Lys292. Positions Pro276–Thr350 are disordered. Residues Pro293–Thr305 show a composition bias toward low complexity. At Ser301 the chain carries Phosphoserine. Over residues Thr341 to Thr350 the composition is skewed to polar residues.

It belongs to the AB hydrolase superfamily. Monoacylglycerol lipase family.

It localises to the lipid droplet. It is found in the cytoplasm. The protein resides in the endoplasmic reticulum. The protein localises to the mitochondrion outer membrane. The enzyme catalyses Hydrolyzes glycerol monoesters of long-chain fatty acids.. The protein operates within glycerolipid metabolism; triacylglycerol degradation. In terms of biological role, converts monoacylglycerides (MAG) to free fatty acids and glycerol. Has a strong preference for monounsaturated monoglycerides. Required for efficient degradation of MAG, short-lived intermediates of glycerolipid metabolism which may also function as lipid signaling molecules. Controls inactivation of the signaling lipid N-palmitoylethanolamine (PEA). Involved in fatty acid ethyl ester (FAEE) catabolism. FAEEs are non-oxidative metabolites of ethanol that are transiently incorporated into lipid droplets (LDs). Their mobilization by LD-resident FAEE hydrolases facilitates a controlled metabolism of these potentially toxic lipid metabolites. In Schizosaccharomyces pombe (strain 972 / ATCC 24843) (Fission yeast), this protein is Putative monoglyceride lipase (mgl1).